Reading from the N-terminus, the 4717-residue chain is Midasin (4717 aa).

AAA-ATPase protomer stretches follow at residues 149–384 (LVQK…FGAF), 458–797 (EQLA…GLRR), 871–1131 (EHYI…QEVI), 1157–1448 (SLKE…NACE), 1552–1811 (VLRA…EVFD), and 1858–2106 (VLES…FLLK). Residues 159–166 (GPEGIGKK) and 474–481 (GETGTGKT) contribute to the ATP site. The residue at position 593 (Ser593) is a Phosphoserine. ATP is bound by residues 901-908 (GPTSSGKT), 1193-1200 (GDTGCGKT), 1566-1573 (GSPGVGKT), and 1876-1883 (GDTATGKT). A linker region spans residues 2173–3925 (KLLRKVLLTN…SGVGAEDITN (1753 aa)). 3 disordered regions span residues 3898 to 3924 (PQEGKSNSGELESGTGLGSGVGAEDIT), 3936 to 4283 (LANE…LGDH), and 4295 to 4365 (EWED…EVGD). Composition is skewed to acidic residues over residues 3936 to 3950 (LANEEDTANQSDLDE) and 3973 to 3993 (ENSDSEEENQDLDEEVNDIPE). The segment covering 4020–4030 (NEQSAANNESD) has biased composition (polar residues). Residues 4031–4049 (LVSKEDDNKALEDKDRQEK) show a composition bias toward basic and acidic residues. Residues 4050–4066 (EDEEEMSDDVGIDDEIQ) show a composition bias toward acidic residues. Residues 4080-4103 (NEDHLDLPEDLKLDEKEGDVSKDS) show a composition bias toward basic and acidic residues. Composition is skewed to acidic residues over residues 4104-4177 (DLED…ESTE), 4184-4196 (EELEQGEVPEDQA), and 4226-4236 (ENEELGEEDGA). Basic and acidic residues-rich tracts occupy residues 4258 to 4275 (QKGEDTSTPKEAMSEADR) and 4329 to 4342 (AEKDQIKSIDRDES). Residues 4343 to 4355 (ANQNPDSMNSTNI) are compositionally biased toward polar residues. The VWFA domain occupies 4505-4707 (QVMISIDDSK…ELPQLLSSAL (203 aa)).

Belongs to the midasin family. In terms of assembly, associates with pre-60S ribosomes in the nucleoplasm.

It localises to the nucleus. Its subcellular location is the nucleolus. The protein localises to the nucleoplasm. Functionally, nuclear chaperone required for maturation and nuclear export of pre-60S ribosome subunits. Functions at successive maturation steps to remove ribosomal factors at critical transition points, first driving the exit of early pre-60S particles from the nucleolus and then driving late pre-60S particles from the nucleus. In Schizosaccharomyces pombe (strain 972 / ATCC 24843) (Fission yeast), this protein is Midasin (mdn1).